We begin with the raw amino-acid sequence, 557 residues long: Formate--tetrahydrofolate ligase (557 aa).

66–73 provides a ligand contact to ATP; the sequence is TPAGEGKT.

The protein belongs to the formate--tetrahydrofolate ligase family.

It carries out the reaction (6S)-5,6,7,8-tetrahydrofolate + formate + ATP = (6R)-10-formyltetrahydrofolate + ADP + phosphate. The protein operates within one-carbon metabolism; tetrahydrofolate interconversion. This is Formate--tetrahydrofolate ligase from Bartonella tribocorum (strain CIP 105476 / IBS 506).